The following is a 227-amino-acid chain: Germin-like protein subfamily T member 3 (227 aa).

The N-terminal stretch at Met-1–Thr-26 is a signal peptide. The cysteines at positions 44 and 59 are disulfide-linked. Residues Ser-71–Asn-219 form the Cupin type-1 domain. Asn-78 carries an N-linked (GlcNAc...) asparagine glycan. 3 residues coordinate Mn(2+): His-119, His-121, and Glu-126. N-linked (GlcNAc...) asparagine glycosylation is present at Asn-143. Position 165 (His-165) interacts with Mn(2+).

The protein belongs to the germin family. In terms of assembly, oligomer (believed to be a pentamer but probably hexamer).

It is found in the secreted. It localises to the extracellular space. The protein resides in the apoplast. Its function is as follows. May play a role in plant defense. Probably has no oxalate oxidase activity even if the active site is conserved. In Arabidopsis thaliana (Mouse-ear cress), this protein is Germin-like protein subfamily T member 3.